The primary structure comprises 69 residues: UPF0270 protein VCM66_2532 (69 aa).

The protein belongs to the UPF0270 family.

The sequence is that of UPF0270 protein VCM66_2532 from Vibrio cholerae serotype O1 (strain M66-2).